The sequence spans 189 residues: Interferon alpha-21 (189 aa).

An N-terminal signal peptide occupies residues 1-23; the sequence is MALSFSLLMAVLVLSYKSICSLG. Cystine bridges form between cysteine 24-cysteine 122 and cysteine 52-cysteine 162.

The protein belongs to the alpha/beta interferon family.

It localises to the secreted. Produced by macrophages, IFN-alpha have antiviral activities. Interferon stimulates the production of two enzymes: a protein kinase and an oligoadenylate synthetase. The polypeptide is Interferon alpha-21 (IFNA21) (Homo sapiens (Human)).